A 208-amino-acid chain; its full sequence is Probable GTP-binding protein EngB (208 aa).

Positions 23 to 205 (LTSEMVILGR…RQTLLKYLLT (183 aa)) constitute an EngB-type G domain. GTP-binding positions include 31 to 38 (GRSNVGKS), 57 to 61 (GKTRL), 84 to 87 (DLPG), 154 to 157 (TKFD), and 182 to 184 (FNA). The Mg(2+) site is built by serine 38 and threonine 59.

The protein belongs to the TRAFAC class TrmE-Era-EngA-EngB-Septin-like GTPase superfamily. EngB GTPase family. Requires Mg(2+) as cofactor.

Its function is as follows. Necessary for normal cell division and for the maintenance of normal septation. This is Probable GTP-binding protein EngB from Helicobacter pylori (strain J99 / ATCC 700824) (Campylobacter pylori J99).